Consider the following 359-residue polypeptide: Homoserine dehydrogenase (359 aa).

4 residues coordinate NAD(+): A13, V15, V16, and A41. Position 16 (V16) interacts with NADP(+). V16 contributes to the NADPH binding site. NADPH contacts are provided by K60, T93, S94, and K117. Residue T93 coordinates NAD(+). T93 serves as a coordination point for NADP(+). Residue K117 participates in NADP(+) binding. The Na(+) site is built by E143, V146, A148, and L150. The NADP(+) site is built by G205 and E208. Residues E208 and D219 each contribute to the L-homoserine site. The Proton donor role is filled by K223. K290 participates in a covalent cross-link: Glycyl lysine isopeptide (Lys-Gly) (interchain with G-Cter in ubiquitin). G340 contributes to the NAD(+) binding site. An NADP(+)-binding site is contributed by G340. An NADPH-binding site is contributed by G340.

The protein belongs to the homoserine dehydrogenase family. In terms of assembly, homodimer. A metal cation is required as a cofactor.

The enzyme catalyses L-homoserine + NADP(+) = L-aspartate 4-semialdehyde + NADPH + H(+). It catalyses the reaction L-homoserine + NAD(+) = L-aspartate 4-semialdehyde + NADH + H(+). It functions in the pathway amino-acid biosynthesis; L-methionine biosynthesis via de novo pathway; L-homoserine from L-aspartate: step 3/3. It participates in amino-acid biosynthesis; L-threonine biosynthesis; L-threonine from L-aspartate: step 3/5. Functionally, catalyzes the conversion of L-aspartate-beta-semialdehyde (L-Asa) to L-homoserine (L-Hse), the third step in the biosynthesis of amino acids that derive from aspartate (the aspartate family of amino acids), including methioinine and threonine, the latter of which is a precursor to isoleucine; production of homoserine leads to a branch-point in the pathway as it can either be O-phosphorylated for processing to threonine, or O-acylated for processing to methionine. The sequence is that of Homoserine dehydrogenase (HOM6) from Saccharomyces cerevisiae (strain ATCC 204508 / S288c) (Baker's yeast).